The chain runs to 687 residues: Adhesion G-protein coupled receptor G1 (687 aa).

An N-terminal signal peptide occupies residues 1–25 (MTAQSLLQTTLFLLSLLFLVQGAHG). Residue 26 to 33 (RGHREDFR) coordinates heparin. At 26 to 402 (RGHREDFRFC…VEVDAVHKHY (377 aa)) the chain is on the extracellular side. 2 disulfides stabilise this stretch: Cys35-Cys91 and Cys121-Cys177. N-linked (GlcNAc...) asparagine glycosylation is found at Asn39, Asn148, Asn156, and Asn171. 190–200 (LKHPQKASRRP) lines the heparin pocket. The region spanning 224-395 (DTVSFEEDRV…AVLMVSSVEV (172 aa)) is the GAIN-B domain. Residues Asn234, Asn303, Asn324, and Asn341 are each glycosylated (N-linked (GlcNAc...) asparagine). Disulfide bonds link Cys346–Cys377 and Cys366–Cys379. Residues 346-395 (CVFWVEDPTLSNPGRWSSAGCETVRRETQTSCFCNHLTYFAVLMVSSVEV) form a GPS region. The stachel stretch occupies residues 384–397 (YFAVLMVSSVEVDA). Residues 403–423 (LSLLSYVGCVVSALACVVTIA) traverse the membrane as a helical segment. At 424-442 (AYLCSRRKPRDYTIKVHMN) the chain is on the cytoplasmic side. A helical transmembrane segment spans residues 443–463 (LLLAVFLLDVSFLLSEPVALT). The Extracellular portion of the chain corresponds to 464–470 (GSQSGCR). The chain crosses the membrane as a helical span at residues 471 to 491 (ASAIFLHFSLLACLSWMGLEG). Topologically, residues 492–512 (YNLYRLVVEVFGTYIPGYLLK) are cytoplasmic. A helical transmembrane segment spans residues 513 to 533 (LSAMGWGFPIFLVTLVALVDV). The Extracellular segment spans residues 534–570 (DNYGPIILAVHRTPESVIYPSMCWIRDSLVSYITNLG). Residues 571–591 (LFSLVFLFNMAMLGTMVVQIL) traverse the membrane as a helical segment. Over 592-603 (RLRPHTQKWSHV) the chain is Cytoplasmic. Residues 604–624 (LTLLGLSLVLGLPWALIFFSF) traverse the membrane as a helical segment. The Extracellular segment spans residues 625–630 (ASGTFQ). Residues 631 to 651 (LVVLYLFSIITSFQGFLIFLW) form a helical membrane-spanning segment. The Cytoplasmic segment spans residues 652–687 (YWSMRLQARGGPSPLKSNSDSARLPISTGSTSSSRI). Residues 664-687 (SPLKSNSDSARLPISTGSTSSSRI) are disordered. A compositionally biased stretch (polar residues) spans 666 to 687 (LKSNSDSARLPISTGSTSSSRI).

Belongs to the G-protein coupled receptor 2 family. LN-TM7 subfamily. Heterodimer of 2 chains generated by proteolytic processing; the large extracellular N-terminal fragment (ADGRG1 NT) and the membrane-bound C-terminal fragment (ADGRG1-CT) predominantly remain associated and non-covalently linked. ADGRG1 NT self-associates in a trans-trans manner; the homophilic interaction enhances receptor signaling. Interacts with TGM2. Interacts with heparin; leading to the reduction of ADGRG1 shedding. Interacts with COL3A1. Part of a GPCR-tetraspanin complex at least consisting of ADGRG1, CD81, eventually CD9, and GNA11 in which CD81 is enhancing the association of ADGRG1 with GNA11. Post-translationally, autoproteolytically cleaved into 2 fragments; the large extracellular N-terminal fragment (ADGRG1 NT) and the membrane-bound C-terminal fragment (ADGRG1 CT) predominantly remain associated and non-covalently linked. Shedding to yield the secreted ADGRG1 N-terminal fragment seems to involve metalloprotease(s). In terms of processing, ubiquitinated. Undergoes polyubiquitination upon activation.

The protein localises to the cell membrane. Its subcellular location is the secreted. It is found in the membrane raft. With respect to regulation, forms a heterodimer of 2 chains generated by proteolytic processing that remain associated through non-covalent interactions mediated by the GAIN-B domain. In the inactivated receptor, the Stachel sequence (also named stalk) is embedded in the GAIN-B domain, where it adopts a beta-strand conformation. On activation, the Stachel moves into the 7 transmembrane region and adopts a twisted hook-shaped configuration that forms contacts within the receptor, leading to coupling of a G-alpha protein, which activates signaling. The cleaved GAIN-B and N-terminal domains can then dissociate from the rest of the receptor. Adhesion G-protein coupled receptor (aGPCR) for steroid hormone 17alpha-hydroxypregnenolone (17-OH), which is involved in cell adhesion and cell-cell interactions. Ligand binding causes a conformation change that triggers signaling via guanine nucleotide-binding proteins (G proteins) and modulates the activity of downstream effectors, such as RhoA pathway. ADGRG1 is coupled to G(12) and/or G(13) G proteins (GNA12 and GNA13, respectively) and mediates the activation Rho small GTPases. Acts as a potent suppressor of ferroptosis: binding to 17-OH-binding initiates signaling that down-regulates CD36 and alleviates ferroptosis-induced liver injury. Ligand-binding also induces cell adhesion activity via association with proteins such as collagen III/COL3A1 and TGM2. Mediates cell matrix adhesion in developing neurons and hematopoietic stem cells. Involved in cortical development, specifically in maintenance of the pial basement membrane integrity and in cortical lamination: association with COL3A1 in the developing brain inhibits neuronal migration via activation of the RhoA pathway. Together with TGM2, acts as a regulator of myelination and myelin repair in oligodendrocyte precursor cells. Acts as a hemostatic sensor of shear force: G protein-coupled receptor signaling is activated in response to shear force in platelets, promoting G(13) G protein signaling, and platelet shape change and aggregation in a COL3A1-dependent manner. Acts as an inhibitor of VEGFA production thereby inhibiting angiogenesis through a signaling pathway mediated by PRKCA. Plays a role in the maintenance of hematopoietic stem cells in bone marrow niche. Plays an essential role in testis development. This chain is Adhesion G-protein coupled receptor G1 (ADGRG1), found in Macaca mulatta (Rhesus macaque).